We begin with the raw amino-acid sequence, 366 residues long: Flagellar P-ring protein (366 aa).

The N-terminal stretch at 1–20 (MVIKFLSALILLLVTTAAQA) is a signal peptide.

The protein belongs to the FlgI family. As to quaternary structure, the basal body constitutes a major portion of the flagellar organelle and consists of four rings (L,P,S, and M) mounted on a central rod.

It localises to the periplasm. Its subcellular location is the bacterial flagellum basal body. Assembles around the rod to form the L-ring and probably protects the motor/basal body from shearing forces during rotation. In Escherichia coli O1:K1 / APEC, this protein is Flagellar P-ring protein.